Here is a 453-residue protein sequence, read N- to C-terminus: Allantoinase (453 aa).

Zn(2+) is bound by residues His59, His61, Lys146, His186, His242, and Asp315. Lys146 bears the N6-carboxylysine mark.

Belongs to the metallo-dependent hydrolases superfamily. Allantoinase family. In terms of assembly, homotetramer. Zn(2+) serves as cofactor. Post-translationally, carboxylation allows a single lysine to coordinate two zinc ions.

The catalysed reaction is (S)-allantoin + H2O = allantoate + H(+). Its pathway is nitrogen metabolism; (S)-allantoin degradation; allantoate from (S)-allantoin: step 1/1. Its function is as follows. Catalyzes the conversion of allantoin (5-ureidohydantoin) to allantoic acid by hydrolytic cleavage of the five-member hydantoin ring. This is Allantoinase from Escherichia coli (strain 55989 / EAEC).